Reading from the N-terminus, the 40-residue chain is Dolichyl-diphosphooligosaccharide--protein glycosyltransferase subunit 4 (40 aa).

At 1 to 4 (MITD) the chain is on the lumenal side. A helical membrane pass occupies residues 5 to 25 (VQLAIFSNVLGVFLFLLVVAY). Topologically, residues 26 to 40 (HYINANTGKSSPKAK) are cytoplasmic.

The protein belongs to the OST4 family. In terms of assembly, component of the oligosaccharyltransferase (OST) complex.

Its subcellular location is the endoplasmic reticulum membrane. Subunit of the oligosaccharyl transferase (OST) complex that catalyzes the initial transfer of a defined glycan (Glc(3)Man(9)GlcNAc(2) in eukaryotes) from the lipid carrier dolichol-pyrophosphate to an asparagine residue within an Asn-X-Ser/Thr consensus motif in nascent polypeptide chains, the first step in protein N-glycosylation. N-glycosylation occurs cotranslationally and the complex associates with the Sec61 complex at the channel-forming translocon complex that mediates protein translocation across the endoplasmic reticulum (ER). All subunits are required for a maximal enzyme activity. This Drosophila persimilis (Fruit fly) protein is Dolichyl-diphosphooligosaccharide--protein glycosyltransferase subunit 4.